We begin with the raw amino-acid sequence, 188 residues long: Ribosome-recycling factor (188 aa).

This sequence belongs to the RRF family.

The protein localises to the cytoplasm. Functionally, responsible for the release of ribosomes from messenger RNA at the termination of protein biosynthesis. May increase the efficiency of translation by recycling ribosomes from one round of translation to another. The protein is Ribosome-recycling factor of Lawsonia intracellularis (strain PHE/MN1-00).